Reading from the N-terminus, the 883-residue chain is Lethal(3)malignant brain tumor-like protein 3 (883 aa).

The interaction with RBPJ. Required for transcription repressor activity on Notch target genes stretch occupies residues 1-64 (MTESASSTSG…VKKATATTTW (64 aa)). Residues 146-156 (HAKDKDQKDER) are compositionally biased toward basic and acidic residues. Positions 146–223 (HAKDKDQKDE…RGDSAVLKQG (78 aa)) are disordered. 2 stretches are compositionally biased toward acidic residues: residues 157-166 (DGGEDNDEED) and 185-194 (DDGEERDDEM). 3 MBT repeats span residues 232–332 (WCWA…LRPP), 340–439 (FNWQ…LITP), and 448–543 (FSWD…LQAP). The CCHHC-type; degenerate zinc finger occupies 549–593 (LMEPSETGGCPTLGCRGVGHFKKSRYLGTQSGANCPYSEINLSKE). The interval 595-768 (IFPDRLSGDT…TQQQAQTQQQ (174 aa)) is disordered. Basic and acidic residues predominate over residues 616-662 (KRMDTRESSSSPETREKHANNFKEDSEKKKENEVKTSAEAKVVREEP). Residue K638 forms a Glycyl lysine isopeptide (Lys-Gly) (interchain with G-Cter in SUMO2) linkage. Low complexity-rich tracts occupy residues 663-742 (TPSV…QQPQ) and 749-768 (QPQQ…TQQQ). The SAM domain occupies 811 to 875 (WSTDEVSEFI…FNSILMFKAA (65 aa)).

Interacts with RNF2. Interacts (via SAM domain) with SAMD1 (via SAM domain); the interaction mediates L3MBTL3 binding to chromatin. Interacts with RBPJ; the interaction is required for L3MBTL3 localization to chromatin and is impaired the Notch-derived peptides containing the intracellular domain (NICD). Interacts (via SAM domain) with KDM1A. Interacts with DCAF5. Interacts with DNMT1. Interacts with E2F1. Interacts with SOX2. Interacts with SFMBT1. In terms of tissue distribution, detected in hematopoietic progenitor cells in fetal liver. Detected in adult bone marrow, heart, brain, spleen, lung, liver, kidney and testis.

The protein localises to the nucleus. Its function is as follows. Is a negative regulator of Notch target genes expression, required for RBPJ-mediated transcriptional repression. It recruits KDM1A to Notch-responsive elements and promotes KDM1A-mediated H3K4me demethylation. Involved in the regulation of ubiquitin-dependent degradation of a set of methylated non-histone proteins, including SOX2. It acts as an adapter recruiting the CRL4-DCAF5 E3 ubiquitin ligase complex to methylated target proteins. Also involved in the regulation of ubiquitin-dependent degradation of methylated DNMT1 and E2F1. Required for normal maturation of myeloid progenitor cells. The protein is Lethal(3)malignant brain tumor-like protein 3 of Mus musculus (Mouse).